Reading from the N-terminus, the 515-residue chain is Vacuolar fusion protein CCZ1 homolog A (515 aa).

The protein belongs to the CCZ1 family. Interacts with MON1.

It localises to the endosome. The protein resides in the prevacuolar compartment. Functionally, plays an important role in membrane trafficking through the secretory apparatus. In complex with MON1, acts as a guanine exchange factor (GEF) for RABG3F of the Rab7 protein family. Promotes the exchange of GDP to GTP, converting RABG3F from an inactive GDP-bound form into an active GTP-bound form. The RABG3F active form is involved in protein trafficking from prevacuolar compartments (PVCs) to vacuoles. May serve as a linker between Rab5 and Rab7 protein families in PVCs and mediate PVC maturation. The chain is Vacuolar fusion protein CCZ1 homolog A from Arabidopsis thaliana (Mouse-ear cress).